The following is a 631-amino-acid chain: Glutamine--fructose-6-phosphate aminotransferase [isomerizing] (631 aa).

The active-site Nucleophile; for GATase activity is C2. One can recognise a Glutamine amidotransferase type-2 domain in the interval 2–225 (CGIVGYIGTQ…NGEIARLTPL (224 aa)). SIS domains lie at 298–446 (LDPQ…QRHS) and 480–621 (LAHE…VDQP). K626 acts as the For Fru-6P isomerization activity in catalysis.

As to quaternary structure, homodimer.

Its subcellular location is the cytoplasm. The enzyme catalyses D-fructose 6-phosphate + L-glutamine = D-glucosamine 6-phosphate + L-glutamate. Its function is as follows. Catalyzes the first step in hexosamine metabolism, converting fructose-6P into glucosamine-6P using glutamine as a nitrogen source. The polypeptide is Glutamine--fructose-6-phosphate aminotransferase [isomerizing] (Synechocystis sp. (strain ATCC 27184 / PCC 6803 / Kazusa)).